The following is a 414-amino-acid chain: Probable cell wall biosynthesis protein LcpB (414 aa).

A disordered region spans residues Met1–Arg108. At Met1 to Cys120 the chain is on the cytoplasmic side. Residues Ile9 to Gly23 are compositionally biased toward basic and acidic residues. Pro residues predominate over residues Arg33–Pro42. The span at Pro43–Arg53 shows a compositional bias: low complexity. The span at Gln54 to Val80 shows a compositional bias: pro residues. Residues Leu121–Trp141 traverse the membrane as a helical segment. Residues Ala142–Arg414 lie on the Periplasmic side of the membrane.

This sequence belongs to the LytR/CpsA/Psr (LCP) family.

Its subcellular location is the cell inner membrane. This chain is Probable cell wall biosynthesis protein LcpB, found in Corynebacterium glutamicum (strain ATCC 13032 / DSM 20300 / JCM 1318 / BCRC 11384 / CCUG 27702 / LMG 3730 / NBRC 12168 / NCIMB 10025 / NRRL B-2784 / 534).